A 356-amino-acid polypeptide reads, in one-letter code: MKTFLVFALLALAAASAVAQISQQQQAPPFSQQQQPPFSQQQQPPFSQQQQSPFSQQQQQPPFAQQQQPPFSQQPPISQQQQPPFSQQQQPQFSQQQQPPYSQQQQPPYSQQQQPPFSQQQQPPFSQQQQQPPFTQQQQQQQQQQPFTQQQQPPFSQQPPISQQQQPPFLQQQRPPFSRQQQIPVIHPSVLQQLNPCKVFLQQQCIPVAMQRCLARSQMLQQSICHVMQQQCCQQLRQIPEQSRHESIRAIIYSIILQQQQQQQQQQQQQQGQSIIQYQQQQPQQLGQCVSQPLQQLQQQLGQQPQQQQLAHQIAQLEVMTSIALRTLPTMCNVNVPLYETTTSVPLGVGIGVGVY.

Residues 1-19 form the signal peptide; that stretch reads MKTFLVFALLALAAASAVA. The segment at 20-179 is disordered; sequence QISQQQQAPP…LQQQRPPFSR (160 aa).

This sequence belongs to the gliadin/glutenin family. Disulfide-bridge linked aggregates.

In terms of biological role, glutenins are high-molecular weight seed storage proteins of wheat endosperm. Thought to be responsible for the visco-elastic property of wheat dough. In Triticum aestivum (Wheat), this protein is Glutenin, low molecular weight subunit.